The following is a 617-amino-acid chain: Dihydroxy-acid dehydratase (617 aa).

Mg(2+) is bound at residue Asp-81. Cys-122 is a binding site for [2Fe-2S] cluster. Mg(2+)-binding residues include Asp-123 and Lys-124. Lys-124 is subject to N6-carboxylysine. Cys-195 contacts [2Fe-2S] cluster. Glu-491 provides a ligand contact to Mg(2+). Ser-517 functions as the Proton acceptor in the catalytic mechanism.

This sequence belongs to the IlvD/Edd family. Homodimer. [2Fe-2S] cluster serves as cofactor. It depends on Mg(2+) as a cofactor.

It carries out the reaction (2R)-2,3-dihydroxy-3-methylbutanoate = 3-methyl-2-oxobutanoate + H2O. The enzyme catalyses (2R,3R)-2,3-dihydroxy-3-methylpentanoate = (S)-3-methyl-2-oxopentanoate + H2O. Its pathway is amino-acid biosynthesis; L-isoleucine biosynthesis; L-isoleucine from 2-oxobutanoate: step 3/4. It participates in amino-acid biosynthesis; L-valine biosynthesis; L-valine from pyruvate: step 3/4. Functions in the biosynthesis of branched-chain amino acids. Catalyzes the dehydration of (2R,3R)-2,3-dihydroxy-3-methylpentanoate (2,3-dihydroxy-3-methylvalerate) into 2-oxo-3-methylpentanoate (2-oxo-3-methylvalerate) and of (2R)-2,3-dihydroxy-3-methylbutanoate (2,3-dihydroxyisovalerate) into 2-oxo-3-methylbutanoate (2-oxoisovalerate), the penultimate precursor to L-isoleucine and L-valine, respectively. This chain is Dihydroxy-acid dehydratase, found in Caulobacter vibrioides (strain ATCC 19089 / CIP 103742 / CB 15) (Caulobacter crescentus).